A 292-amino-acid chain; its full sequence is Ribosomal protein L11 methyltransferase (292 aa).

Residues threonine 144, glycine 165, aspartate 187, and asparagine 229 each contribute to the S-adenosyl-L-methionine site.

The protein belongs to the methyltransferase superfamily. PrmA family.

It localises to the cytoplasm. The enzyme catalyses L-lysyl-[protein] + 3 S-adenosyl-L-methionine = N(6),N(6),N(6)-trimethyl-L-lysyl-[protein] + 3 S-adenosyl-L-homocysteine + 3 H(+). Functionally, methylates ribosomal protein L11. The polypeptide is Ribosomal protein L11 methyltransferase (Pseudomonas putida (strain GB-1)).